The primary structure comprises 283 residues: MYHDVSYLLSRLINGPLSLRQIYFASSNGPVPDLAYQVDFPRLEIVLEGEFVDTGAGATLVPGDVLYVPAGGWNFPQWQAPATTFSVLFGKQQLGFSVVQWDGKQYQNLAKQHVARRGPRIGSFLLQTLNEMQMQPQEQQTARLIVASLLSHCRDLLGSQIQTASRSQALFEAIRDYIDERYASALTRESVAQAFYISPNYLSHLFQKTGAIGFNEYLNHTRLEHAKTLLKGYDLKVKEVAHACGFVDSNYFCRLFRKNTERSPSEYRRQYHSQLTEKPTTPE.

An HTH araC/xylS-type domain is found at 172 to 270; it reads EAIRDYIDER…ERSPSEYRRQ (99 aa). 2 consecutive DNA-binding regions (H-T-H motif) follow at residues 189-210 and 237-260; these read ESVA…QKTG and VKEV…RKNT.

This is an uncharacterized protein from Escherichia coli (strain K12).